The chain runs to 381 residues: Chorismate synthase (381 aa).

Arg41 and Arg47 together coordinate NADP(+). FMN-binding positions include 127 to 129, 247 to 248, Gly291, 306 to 310, and Arg332; these read RAS, QA, and KPIPT.

It belongs to the chorismate synthase family. Homotetramer. FMNH2 is required as a cofactor.

The catalysed reaction is 5-O-(1-carboxyvinyl)-3-phosphoshikimate = chorismate + phosphate. It functions in the pathway metabolic intermediate biosynthesis; chorismate biosynthesis; chorismate from D-erythrose 4-phosphate and phosphoenolpyruvate: step 7/7. Its function is as follows. Catalyzes the anti-1,4-elimination of the C-3 phosphate and the C-6 proR hydrogen from 5-enolpyruvylshikimate-3-phosphate (EPSP) to yield chorismate, which is the branch point compound that serves as the starting substrate for the three terminal pathways of aromatic amino acid biosynthesis. This reaction introduces a second double bond into the aromatic ring system. The chain is Chorismate synthase from Anaeromyxobacter dehalogenans (strain 2CP-C).